Here is a 435-residue protein sequence, read N- to C-terminus: Ras association domain-containing protein 9 (435 aa).

The segment at 1-22 is disordered; it reads MAPFGRNLLKTRHKNRSPTKDM. The 95-residue stretch at 25-119 folds into the Ras-associating domain; sequence EEKEIVVWVC…MQFVLVKADA (95 aa). A coiled-coil region spans residues 195 to 290; sequence HTIHQQVKRM…DKLSAEIEKE (96 aa). A disordered region spans residues 380-435; that stretch reads NRAKESEVPSSNGEIPPFTQRVFSNYTNDTDSDTGISSNHSQDSETTVGDVVLLST. Polar residues predominate over residues 400-426; the sequence is RVFSNYTNDTDSDTGISSNHSQDSETT.

As to quaternary structure, interacts with PAM.

It is found in the endosome. May play a role in regulating vesicuar trafficking in cells. This Homo sapiens (Human) protein is Ras association domain-containing protein 9 (RASSF9).